The sequence spans 93 residues: Small ribosomal subunit protein uS19 (93 aa).

This sequence belongs to the universal ribosomal protein uS19 family.

In terms of biological role, protein S19 forms a complex with S13 that binds strongly to the 16S ribosomal RNA. In Leptospira borgpetersenii serovar Hardjo-bovis (strain JB197), this protein is Small ribosomal subunit protein uS19.